Here is a 776-residue protein sequence, read N- to C-terminus: DNA topoisomerase 1 (776 aa).

A Toprim domain is found at 1 to 111 (MKLVIVESPA…VESDDFFKRV (111 aa)). E7 and D80 together coordinate Mg(2+). One can recognise a Topo IA-type catalytic domain in the interval 132-568 (DTNLVNAQQA…FWRGFNHNIE (437 aa)). An interaction with DNA region spans residues 166 to 171 (SAGRVQ). Y304 (O-(5'-phospho-DNA)-tyrosine intermediate) is an active-site residue. The C4-type zinc finger occupies 600 to 627 (CPSCKTGQLSLKLGKFGAFLACSNYPEC).

The protein belongs to the type IA topoisomerase family. In terms of assembly, monomer. Mg(2+) serves as cofactor.

The catalysed reaction is ATP-independent breakage of single-stranded DNA, followed by passage and rejoining.. Its function is as follows. Releases the supercoiling and torsional tension of DNA, which is introduced during the DNA replication and transcription, by transiently cleaving and rejoining one strand of the DNA duplex. Introduces a single-strand break via transesterification at a target site in duplex DNA. The scissile phosphodiester is attacked by the catalytic tyrosine of the enzyme, resulting in the formation of a DNA-(5'-phosphotyrosyl)-enzyme intermediate and the expulsion of a 3'-OH DNA strand. The free DNA strand then undergoes passage around the unbroken strand, thus removing DNA supercoils. Finally, in the religation step, the DNA 3'-OH attacks the covalent intermediate to expel the active-site tyrosine and restore the DNA phosphodiester backbone. In Rickettsia prowazekii (strain Madrid E), this protein is DNA topoisomerase 1.